A 502-amino-acid polypeptide reads, in one-letter code: MLREFREQRIKEIEQLKRKNINPYPNRFDKTHTSEMIKKEFEGLNPGEVKDDVFVSTAGRIMSLRKHGKSAFFHIKDFYGRIQAYIRKDVVGEEAYEFFKEHIAIGDIVGVKGNVFKSKTGEITILIKEIKLLNKPLRPMPEKWHGIKDKEVLYRQRYVDMIANDDTLNRFKVRFEVIKLIRDFLNSKGFIEVETPILEYVTGGASARPFVTHLNVFDIEMYMRIATELYLKRFIVGGFEKVYELGKNFRNEGLSYKHHPEFTSIEIYQAYADYEDMMNLTEELFVYIVEKLFGTTKIKYQNVELDFSRPWRRIKMRDFIKEHLGVDILEDSMGRMMDVLEEHGVEVEIRDKGHMIEKLWDLVEDKVVQPTFLLEHPVEISPLAKKHREDPRVTERFELIIYGREMANAFSELNDPVDQYERFLKQVELREAGDEEAQMMDRDFVRALEYGMPPTGGLGIGIDRLVMLLTNSATIRDVIAFPLVRLKSFEEEELDIEGGSQE.

Mg(2+) is bound by residues E398 and E405.

This sequence belongs to the class-II aminoacyl-tRNA synthetase family. In terms of assembly, homodimer. It depends on Mg(2+) as a cofactor.

Its subcellular location is the cytoplasm. It catalyses the reaction tRNA(Lys) + L-lysine + ATP = L-lysyl-tRNA(Lys) + AMP + diphosphate. This Thermosipho melanesiensis (strain DSM 12029 / CIP 104789 / BI429) protein is Lysine--tRNA ligase.